The following is a 158-amino-acid chain: SKP1-like protein 18 (158 aa).

Residues 99-157 (ILAANYLNFEGLLGFASQTVADYIKDKTPEEVREIFNIENDFTPEEEEEIRKENAWTFN) form an interaction with the F-box domain of F-box proteins region.

This sequence belongs to the SKP1 family. Part of a SCF (SKP1-cullin-F-box) protein ligase complex. Interacts with CPR1/CPR30, EBF1, SKP2A, At3g61590, At4g38940 and At5g49610. In terms of tissue distribution, expressed in young seedlings, roots, leaves, floral stems, inflorescences, pollen, and siliques.

The protein resides in the nucleus. It functions in the pathway protein modification; protein ubiquitination. Its function is as follows. Involved in ubiquitination and subsequent proteasomal degradation of target proteins. Together with CUL1, RBX1 and a F-box protein, it forms a SCF E3 ubiquitin ligase complex. The functional specificity of this complex depends on the type of F-box protein. In the SCF complex, it serves as an adapter that links the F-box protein to CUL1. The chain is SKP1-like protein 18 (ASK18) from Arabidopsis thaliana (Mouse-ear cress).